The primary structure comprises 57 residues: Large ribosomal subunit protein eL20 (57 aa).

The protein belongs to the eukaryotic ribosomal protein eL20 family. Part of the 50S ribosomal subunit. Binds 23S rRNA.

The polypeptide is Large ribosomal subunit protein eL20 (Natronomonas pharaonis (strain ATCC 35678 / DSM 2160 / CIP 103997 / JCM 8858 / NBRC 14720 / NCIMB 2260 / Gabara) (Halobacterium pharaonis)).